Here is a 399-residue protein sequence, read N- to C-terminus: Acetylornithine aminotransferase (399 aa).

Pyridoxal 5'-phosphate is bound by residues 102-103 (GA) and F138. R141 is a binding site for N(2)-acetyl-L-ornithine. 223 to 226 (DEVQ) is a binding site for pyridoxal 5'-phosphate. N6-(pyridoxal phosphate)lysine is present on K252. T280 provides a ligand contact to pyridoxal 5'-phosphate.

Belongs to the class-III pyridoxal-phosphate-dependent aminotransferase family. ArgD subfamily. In terms of assembly, homodimer. Requires pyridoxal 5'-phosphate as cofactor.

The protein localises to the cytoplasm. It carries out the reaction N(2)-acetyl-L-ornithine + 2-oxoglutarate = N-acetyl-L-glutamate 5-semialdehyde + L-glutamate. It participates in amino-acid biosynthesis; L-arginine biosynthesis; N(2)-acetyl-L-ornithine from L-glutamate: step 4/4. The sequence is that of Acetylornithine aminotransferase from Ralstonia nicotianae (strain ATCC BAA-1114 / GMI1000) (Ralstonia solanacearum).